The sequence spans 497 residues: MEKKYILALDQGTTSSRAMIIDEEGEVIGVAQEEFDQIFPKPGWVEHSANEIWASILAVIAGVLLKTNISSKEIAGIGITNQRETTVIWDKESGNPIYNAIVWQSRQTEDICKQLRKDGYEDTIRSKTGLLIDPYFAGTKARWILDHVDGAQERAEKGELLFGTIDTWLVWKLTGGRAHITDYSNASRTLLYNIYDLEWDDELLKMLNIPRAMLPEVRPSSEVYADTVPYHFFGEEVPVAGIAGDQQAALFGQGCFEKGMAKNTYGTGCFLLMNTGEKAVRSENGLLTTLAWGLDGKVEYALEGSIFVAGSAIQWLRDGLRMVRQSSDSENYASRIESSDGVYVVPAFVGLGAPYWDSDVRGAVFGLTRGTEKEQFIRATLESLAYQTRDVLYAMEQDSGISLKTLRVDGGASANNFLMQFQSDILGVPVERPENKETTVLGAAFLAGLAVGVWKDKNEIKKHWKLDKRFEVEMKDDQREDLYEGWHKAVKAAQAFK.

T13 serves as a coordination point for ADP. Positions 13, 14, and 15 each coordinate ATP. Residue T13 coordinates sn-glycerol 3-phosphate. An ADP-binding site is contributed by R17. Sn-glycerol 3-phosphate is bound by residues R83, E84, and Y135. R83, E84, and Y135 together coordinate glycerol. At H231 the chain carries Phosphohistidine; by HPr. Residue D245 participates in sn-glycerol 3-phosphate binding. Glycerol contacts are provided by D245 and Q246. ADP-binding residues include T267 and G310. Residues T267, G310, Q314, and G411 each coordinate ATP. 2 residues coordinate ADP: G411 and N415.

It belongs to the FGGY kinase family. Homotetramer and homodimer (in equilibrium). The phosphoenolpyruvate-dependent sugar phosphotransferase system (PTS), including enzyme I, and histidine-containing protein (HPr) are required for the phosphorylation, which leads to the activation of the enzyme.

The enzyme catalyses glycerol + ATP = sn-glycerol 3-phosphate + ADP + H(+). The protein operates within polyol metabolism; glycerol degradation via glycerol kinase pathway; sn-glycerol 3-phosphate from glycerol: step 1/1. Its activity is regulated as follows. Activated by phosphorylation and inhibited by fructose 1,6-bisphosphate (FBP). In terms of biological role, key enzyme in the regulation of glycerol uptake and metabolism. Catalyzes the phosphorylation of glycerol to yield sn-glycerol 3-phosphate. The chain is Glycerol kinase from Listeria innocua serovar 6a (strain ATCC BAA-680 / CLIP 11262).